Reading from the N-terminus, the 503-residue chain is E3 ubiquitin-protein ligase IE61 (503 aa).

The RING-type zinc finger occupies 19–58 (CAICMSAISGLGKTLPCLHDFCFVCIQTWTSTSAQCPLCR). Disordered stretches follow at residues 175–194 (AVIT…PSSR), 367–418 (SGPI…LFVD), and 445–503 (AALP…VRRK). Over residues 375-388 (GGSTSQDTSVSNIH) the composition is skewed to polar residues. Over residues 389–403 (RSPPGGSSTQPSSGR) the composition is skewed to low complexity. The segment covering 404-414 (RPGRPKGVKRR) has biased composition (basic residues). Residues 471 to 480 (PSTSGSSPSP) show a composition bias toward low complexity.

Interacts with host BTRC; this interaction seems to inactivate SCF-mediated protein degradation in general.

It catalyses the reaction S-ubiquitinyl-[E2 ubiquitin-conjugating enzyme]-L-cysteine + [acceptor protein]-L-lysine = [E2 ubiquitin-conjugating enzyme]-L-cysteine + N(6)-ubiquitinyl-[acceptor protein]-L-lysine.. In terms of biological role, RING-finger E3 ubiquitin ligase that degrades host SP100, one of the major components of ND10 nuclear bodies, thereby disrupting the organization of these bodies. Also plays a role in the inhibition of host NF-kappa-B pathway by blocking the SCF(BTRC)-mediated addition of ubiquitin chains to host IkappaBalpha/NFKBIA, thereby interfering with its degradation. In Cercopithecine herpesvirus 9 (strain DHV) (CeHV-9), this protein is E3 ubiquitin-protein ligase IE61.